A 161-amino-acid polypeptide reads, in one-letter code: MHCPFCGKYDTKVTDSRLVAEGDQVRRRRQCNDCGERFTTYETAELVMPRVIKGDGSRETFDERKLRAGMLRALEKRPVSAESIEAAVERIRQRLRARGEREIEAREIGEEVMRSLKRLDQVAYIRFASVYRRFQDLDEFRAEIDRLAQEPSFSPDDADKR.

A zinc finger lies at 3–34; it reads CPFCGKYDTKVTDSRLVAEGDQVRRRRQCNDC. The 91-residue stretch at 49 to 139 folds into the ATP-cone domain; the sequence is PRVIKGDGSR…VYRRFQDLDE (91 aa).

The protein belongs to the NrdR family. It depends on Zn(2+) as a cofactor.

Negatively regulates transcription of bacterial ribonucleotide reductase nrd genes and operons by binding to NrdR-boxes. This chain is Transcriptional repressor NrdR, found in Chromohalobacter salexigens (strain ATCC BAA-138 / DSM 3043 / CIP 106854 / NCIMB 13768 / 1H11).